The sequence spans 371 residues: Peptide chain release factor 2 (371 aa).

The residue at position 250 (Q250) is an N5-methylglutamine.

The protein belongs to the prokaryotic/mitochondrial release factor family. Post-translationally, methylated by PrmC. Methylation increases the termination efficiency of RF2.

The protein resides in the cytoplasm. Functionally, peptide chain release factor 2 directs the termination of translation in response to the peptide chain termination codons UGA and UAA. The chain is Peptide chain release factor 2 from Paramagnetospirillum magneticum (strain ATCC 700264 / AMB-1) (Magnetospirillum magneticum).